The chain runs to 691 residues: Elongation factor G (691 aa).

The region spanning 8–282 (HMVRNIGIAA…AVVDYLPAPD (275 aa)) is the tr-type G domain. GTP-binding positions include 17–24 (AHIDAGKT), 81–85 (DTPGH), and 135–138 (NKMD).

It belongs to the TRAFAC class translation factor GTPase superfamily. Classic translation factor GTPase family. EF-G/EF-2 subfamily.

It is found in the cytoplasm. Functionally, catalyzes the GTP-dependent ribosomal translocation step during translation elongation. During this step, the ribosome changes from the pre-translocational (PRE) to the post-translocational (POST) state as the newly formed A-site-bound peptidyl-tRNA and P-site-bound deacylated tRNA move to the P and E sites, respectively. Catalyzes the coordinated movement of the two tRNA molecules, the mRNA and conformational changes in the ribosome. The chain is Elongation factor G from Campylobacter hominis (strain ATCC BAA-381 / DSM 21671 / CCUG 45161 / LMG 19568 / NCTC 13146 / CH001A).